The following is a 960-amino-acid chain: Probable RNA-binding protein 19 (960 aa).

In terms of domain architecture, RRM 1 spans 2–79; the sequence is SRLIVKNLPN…SRITVEFCKS (78 aa). Disordered stretches follow at residues 85–119 and 149–294; these read KPRA…KKKK and WAND…TTCH. Phosphoserine is present on residues serine 174, serine 176, and serine 180. The span at 176–194 shows a compositional bias: acidic residues; the sequence is SGQESEEEGAGEDLEEEAS. A compositionally biased stretch (basic and acidic residues) spans 273-286; sequence RPPEARAETEKPAN. 2 consecutive RRM domains span residues 294-369 and 402-480; these read HTVK…REKN and GRLF…PSTI. Residue lysine 481 forms a Glycyl lysine isopeptide (Lys-Gly) (interchain with G-Cter in SUMO2) linkage. The segment at 491–513 is disordered; it reads LGSSSYKKKKEAQDKANSASSHN. The RRM 4 domain maps to 587–659; it reads TVILVKNLPA…VPLYLEWAPV (73 aa). The disordered stretch occupies residues 667 to 729; that stretch reads PQKKKLQDTP…EEEEEESLPG (63 aa). 2 stretches are compositionally biased toward acidic residues: residues 689-706 and 714-726; these read TVPD…EEGA and EEEE…EEES. 2 consecutive RRM domains span residues 730–811 and 832–912; these read CTLF…ISER and SKIL…WADS. Serine 936, serine 949, and serine 951 each carry phosphoserine.

It belongs to the RRM MRD1 family. As to expression, expressed in the crypts of Lieberkuhn of the intestine and in intestinal neoplasia (at protein level).

Its subcellular location is the nucleus. It localises to the nucleolus. The protein resides in the nucleoplasm. It is found in the cytoplasm. The protein localises to the chromosome. Functionally, plays a role in embryo pre-implantation development. In Homo sapiens (Human), this protein is Probable RNA-binding protein 19 (RBM19).